The following is a 358-amino-acid chain: Methylthioribose-1-phosphate isomerase (358 aa).

Residues 54–56 (RGA), R96, and Q205 each bind substrate. D246 acts as the Proton donor in catalysis. 256–257 (NK) is a binding site for substrate.

The protein belongs to the eIF-2B alpha/beta/delta subunits family. MtnA subfamily.

It carries out the reaction 5-(methylsulfanyl)-alpha-D-ribose 1-phosphate = 5-(methylsulfanyl)-D-ribulose 1-phosphate. The protein operates within amino-acid biosynthesis; L-methionine biosynthesis via salvage pathway; L-methionine from S-methyl-5-thio-alpha-D-ribose 1-phosphate: step 1/6. Its function is as follows. Catalyzes the interconversion of methylthioribose-1-phosphate (MTR-1-P) into methylthioribulose-1-phosphate (MTRu-1-P). The polypeptide is Methylthioribose-1-phosphate isomerase (Pseudomonas paraeruginosa (strain DSM 24068 / PA7) (Pseudomonas aeruginosa (strain PA7))).